Here is a 373-residue protein sequence, read N- to C-terminus: sn-glycerol-3-phosphate import ATP-binding protein UgpC (373 aa).

The ABC transporter domain occupies 4 to 235 (LTLSNITKSY…PASVFVATFI (232 aa)). Residue 37 to 44 (GPSGCGKS) participates in ATP binding.

The protein belongs to the ABC transporter superfamily. sn-glycerol-3-phosphate importer (TC 3.A.1.1.3) family. As to quaternary structure, the complex is composed of two ATP-binding proteins (UgpC), two transmembrane proteins (UgpA and UgpE) and a solute-binding protein (UgpB).

The protein resides in the cell inner membrane. It carries out the reaction sn-glycerol 3-phosphate(out) + ATP + H2O = sn-glycerol 3-phosphate(in) + ADP + phosphate + H(+). Functionally, part of the ABC transporter complex UgpBAEC involved in sn-glycerol-3-phosphate (G3P) import. Responsible for energy coupling to the transport system. This is sn-glycerol-3-phosphate import ATP-binding protein UgpC from Psychromonas ingrahamii (strain DSM 17664 / CCUG 51855 / 37).